The following is a 111-amino-acid chain: Ribonuclease P protein component (111 aa).

This sequence belongs to the RnpA family. Consists of a catalytic RNA component (M1 or rnpB) and a protein subunit.

The enzyme catalyses Endonucleolytic cleavage of RNA, removing 5'-extranucleotides from tRNA precursor.. RNaseP catalyzes the removal of the 5'-leader sequence from pre-tRNA to produce the mature 5'-terminus. It can also cleave other RNA substrates such as 4.5S RNA. The protein component plays an auxiliary but essential role in vivo by binding to the 5'-leader sequence and broadening the substrate specificity of the ribozyme. The polypeptide is Ribonuclease P protein component (Mycoplasmopsis pulmonis (strain UAB CTIP) (Mycoplasma pulmonis)).